A 61-amino-acid chain; its full sequence is Ferredoxin-2 (61 aa).

2 consecutive 4Fe-4S ferredoxin-type domains span residues histidine 2–aspartate 27 and glutamate 28–valine 61. [4Fe-4S] cluster is bound by residues cysteine 8, cysteine 11, cysteine 14, cysteine 18, cysteine 37, cysteine 40, cysteine 49, and cysteine 53.

It depends on [4Fe-4S] cluster as a cofactor.

Functionally, ferredoxins are iron-sulfur proteins that transfer electrons in a wide variety of metabolic reactions. The sequence is that of Ferredoxin-2 from Chlorobium limicola.